We begin with the raw amino-acid sequence, 241 residues long: Regulatory protein VirG (241 aa).

The 115-residue stretch at 3 to 117 folds into the Response regulatory domain; it reads HVLVIDDDVA…EFLARIRVAL (115 aa). A 4-aspartylphosphate modification is found at aspartate 52. The ompR/PhoB-type DNA-binding region spans 129 to 229; that stretch reads RRSFYFADWT…ARGAGYFFDA (101 aa).

Phosphorylated by wide host range (WHR) VirA protein.

Its subcellular location is the cytoplasm. In terms of biological role, virG is required for the positive regulation of at least two vir loci encoded by the Ri plasmid of A.rhizogenes. This Rhizobium rhizogenes (Agrobacterium rhizogenes) protein is Regulatory protein VirG (virG).